The chain runs to 104 residues: L-rhamnose mutarotase (104 aa).

Tyr-18 lines the substrate pocket. Catalysis depends on His-22, which acts as the Proton donor. Substrate contacts are provided by residues Tyr-41 and 76-77 (WW).

This sequence belongs to the rhamnose mutarotase family. As to quaternary structure, homodimer.

The protein resides in the cytoplasm. The enzyme catalyses alpha-L-rhamnose = beta-L-rhamnose. Its pathway is carbohydrate metabolism; L-rhamnose metabolism. Functionally, involved in the anomeric conversion of L-rhamnose. The polypeptide is L-rhamnose mutarotase (Shigella dysenteriae serotype 1 (strain Sd197)).